We begin with the raw amino-acid sequence, 424 residues long: MTKLTLTVALVSALLASGASAQQPTGTGNGPDPRATTDLNRNQPTKSWTQWQPKATYAFSQLPDQYMGANRIESGEGGQPGGEPQSGYNTCARNTWNQDSKCQTAWINSLEDFCLWAPAEYGTVGEKERSGVAYCTTDRHGTRLIPDGTIQGAHFVRTRDYVQVTGVGDFTSILIPDGDDGGEFDPHGADDLGNPIGGIVYTTANPASNGEPFFVSEWTNFMSYNQFCLRACWGERAAAQCEHIYDVMGCRWNIPANYEPGVFETCDGDIGQLQGIYSGSTFRQGDPVTPPAHPAPSSSQCSSVSTIGHGLLARSASASTSSVETSSSSAASSAATDSSASTNSASSMTRVTNSAVSTNVGSGTGSGSGSGSGSGSGSGSGSSSGSSSSGSSSNTQGAASSASSLTISVGLAGLVAIGAAAFAL.

The signal sequence occupies residues 1–21; sequence MTKLTLTVALVSALLASGASA. Disordered regions lie at residues 19-54, 69-90, 278-304, and 327-398; these read ASAQ…WQPK, ANRI…GYNT, SGST…CSSV, and SSSA…TQGA. Over 22–403 the chain is Extracellular; the sequence is QQPTGTGNGP…NTQGAASSAS (382 aa). Residues 37-54 show a composition bias toward polar residues; the sequence is TDLNRNQPTKSWTQWQPK. Composition is skewed to low complexity over residues 295-304 and 327-347; these read APSSSQCSSV and SSSA…SASS. The span at 362–382 shows a compositional bias: gly residues; sequence SGTGSGSGSGSGSGSGSGSGS. Residues 383-398 show a composition bias toward low complexity; the sequence is SSGSSSSGSSSNTQGA. A helical transmembrane segment spans residues 404-424; sequence SLTISVGLAGLVAIGAAAFAL.

Its subcellular location is the cell membrane. The protein resides in the secreted. In terms of biological role, plays a role in the formation of the appressorium, a specialized infection structure with the purpose of penetrating the host surface, and is required for proper remodeling of the appressorium wall and vesicle secretion. The polypeptide is Appressorium protein ROW1 (Mycosarcoma maydis (Corn smut fungus)).